A 510-amino-acid polypeptide reads, in one-letter code: RNA-splicing ligase RtcB homolog (510 aa).

Residues Asp-124, Cys-127, His-232, His-264, and His-358 each coordinate Mn(2+). Residue 231 to 235 (NHYAE) participates in GMP binding. Residues 358–359 (HN), 407–410 (GGTM), Ser-414, 433–436 (HGAG), and Lys-509 each bind GMP. His-433 acts as the GMP-histidine intermediate in catalysis.

The protein belongs to the RtcB family. In terms of assembly, catalytic component of the tRNA-splicing ligase complex. Requires Mn(2+) as cofactor.

It catalyses the reaction a 3'-end 3'-phospho-ribonucleotide-RNA + a 5'-end dephospho-ribonucleoside-RNA + GTP = a ribonucleotidyl-ribonucleotide-RNA + GMP + diphosphate. The enzyme catalyses a 3'-end 2',3'-cyclophospho-ribonucleotide-RNA + a 5'-end dephospho-ribonucleoside-RNA + GTP + H2O = a ribonucleotidyl-ribonucleotide-RNA + GMP + diphosphate + H(+). Catalytic subunit of the tRNA-splicing ligase complex that acts by directly joining spliced tRNA halves to mature-sized tRNAs by incorporating the precursor-derived splice junction phosphate into the mature tRNA as a canonical 3',5'-phosphodiester. May act as an RNA ligase with broad substrate specificity, and may function toward other RNAs. The polypeptide is RNA-splicing ligase RtcB homolog (Trichoplax adhaerens (Trichoplax reptans)).